The following is a 419-amino-acid chain: Aminoacyltransferase FemB (419 aa).

It belongs to the FemABX family. As to quaternary structure, homodimer. Interacts with FemA.

The protein resides in the cytoplasm. It catalyses the reaction MurNAc-L-Ala-D-isoglutaminyl-L-Lys-(N(6)-tri-Gly)-D-Ala-D-Ala-diphospho-di-trans,octa-cis-undecaprenyl-GlcNAc + 2 glycyl-tRNA(Gly) = MurNAc-L-Ala-D-isoglutaminyl-L-Lys-(N(6)-penta-Gly)-D-Ala-D-Ala-diphospho-di-trans,octa-cis-undecaprenyl-GlcNAc + 2 tRNA(Gly) + 2 H(+). Catalyzes the formation of the pentaglycine interpeptide bridge, which is characteristic of the S.aureus peptidoglycan. Adds glycines 4 and 5 of the pentaglycine bridge, using glycyl-tRNA(Gly) as donor. Involved in resistance to methicillin. The polypeptide is Aminoacyltransferase FemB (femB) (Staphylococcus aureus (strain NCTC 8325 / PS 47)).